A 352-amino-acid chain; its full sequence is Protein RecA (352 aa).

67 to 74 (GPESSGKT) is an ATP binding site.

The protein belongs to the RecA family.

It localises to the cytoplasm. Can catalyze the hydrolysis of ATP in the presence of single-stranded DNA, the ATP-dependent uptake of single-stranded DNA by duplex DNA, and the ATP-dependent hybridization of homologous single-stranded DNAs. It interacts with LexA causing its activation and leading to its autocatalytic cleavage. The protein is Protein RecA of Klebsiella pneumoniae subsp. pneumoniae (strain ATCC 700721 / MGH 78578).